The sequence spans 464 residues: Soluble pyridine nucleotide transhydrogenase (464 aa).

35–44 (DDRRQVGGNC) serves as a coordination point for FAD.

It belongs to the class-I pyridine nucleotide-disulfide oxidoreductase family. FAD is required as a cofactor.

It is found in the cytoplasm. It catalyses the reaction NAD(+) + NADPH = NADH + NADP(+). Conversion of NADPH, generated by peripheral catabolic pathways, to NADH, which can enter the respiratory chain for energy generation. The polypeptide is Soluble pyridine nucleotide transhydrogenase (Pseudomonas putida (strain ATCC 47054 / DSM 6125 / CFBP 8728 / NCIMB 11950 / KT2440)).